Here is a 169-residue protein sequence, read N- to C-terminus: Cytochrome c-type biogenesis protein CcmE (169 aa).

Topologically, residues 1-7 (MTRKQRR) are cytoplasmic. The helical; Signal-anchor for type II membrane protein transmembrane segment at 8 to 28 (MTIIGGSLAVLALAAALVLNA) threads the bilayer. Topologically, residues 29-169 (LRDSIVFFST…AQGNPQGAVR (141 aa)) are periplasmic. Heme contacts are provided by His-122 and Tyr-126. The tract at residues 143–169 (DDYGGKASDGVKPAATTAQGNPQGAVR) is disordered. Positions 158 to 169 (TTAQGNPQGAVR) are enriched in polar residues.

The protein belongs to the CcmE/CycJ family.

It is found in the cell inner membrane. Functionally, heme chaperone required for the biogenesis of c-type cytochromes. Transiently binds heme delivered by CcmC and transfers the heme to apo-cytochromes in a process facilitated by CcmF and CcmH. The sequence is that of Cytochrome c-type biogenesis protein CcmE from Bradyrhizobium diazoefficiens (strain JCM 10833 / BCRC 13528 / IAM 13628 / NBRC 14792 / USDA 110).